We begin with the raw amino-acid sequence, 310 residues long: Probable manganese-dependent inorganic pyrophosphatase (310 aa).

The Mn(2+) site is built by histidine 9, aspartate 13, aspartate 15, aspartate 76, histidine 98, and aspartate 150.

Belongs to the PPase class C family. Mn(2+) serves as cofactor.

The protein localises to the cytoplasm. The enzyme catalyses diphosphate + H2O = 2 phosphate + H(+). In Streptococcus thermophilus (strain CNRZ 1066), this protein is Probable manganese-dependent inorganic pyrophosphatase.